A 246-amino-acid chain; its full sequence is Probable 2-phosphosulfolactate phosphatase (246 aa).

The protein belongs to the ComB family. Mg(2+) serves as cofactor.

It carries out the reaction (2R)-O-phospho-3-sulfolactate + H2O = (2R)-3-sulfolactate + phosphate. The polypeptide is Probable 2-phosphosulfolactate phosphatase (Synechococcus sp. (strain WH7803)).